We begin with the raw amino-acid sequence, 97 residues long: Citrate lyase acyl carrier protein 2 (97 aa).

O-(phosphoribosyl dephospho-coenzyme A)serine is present on serine 14.

The protein belongs to the CitD family. As to quaternary structure, oligomer with a subunit composition of (alpha,beta,gamma)6.

The protein localises to the cytoplasm. Its function is as follows. Covalent carrier of the coenzyme of citrate lyase. The sequence is that of Citrate lyase acyl carrier protein 2 from Salmonella paratyphi A (strain ATCC 9150 / SARB42).